The primary structure comprises 857 residues: DNA mismatch repair protein MutS (857 aa).

608 to 615 (GPNMSGKS) contacts ATP.

It belongs to the DNA mismatch repair MutS family.

Its function is as follows. This protein is involved in the repair of mismatches in DNA. It is possible that it carries out the mismatch recognition step. This protein has a weak ATPase activity. The polypeptide is DNA mismatch repair protein MutS (Lactobacillus gasseri (strain ATCC 33323 / DSM 20243 / BCRC 14619 / CIP 102991 / JCM 1131 / KCTC 3163 / NCIMB 11718 / NCTC 13722 / AM63)).